Consider the following 118-residue polypeptide: Cytochrome b-c1 complex subunit 7 (118 aa).

Residues 1–32 form an igE-binding. Immunodominant epitope; induces specific IgE antibody production in mice. Causes degranulation of rat basophilic leukemia (RBL) cells and the release of beta-hexosaminidase from them region; sequence MVHLTKTLRFINNPGFRKFYYGLQGYNKYGLY.

This sequence belongs to the UQCRB/QCR7 family. As to quaternary structure, component of the ubiquinol-cytochrome c oxidoreductase (cytochrome b-c1 complex, complex III, CIII), a multisubunit enzyme composed of 3 respiratory subunits cytochrome b, cytochrome c1 and Rieske protein, 2 core protein subunits, and additional low-molecular weight protein subunits. The complex exists as an obligatory dimer and forms supercomplexes (SCs) in the inner mitochondrial membrane with cytochrome c oxidase (complex IV, CIV).

It localises to the mitochondrion inner membrane. In terms of biological role, component of the ubiquinol-cytochrome c oxidoreductase, a multisubunit transmembrane complex that is part of the mitochondrial electron transport chain which drives oxidative phosphorylation. The respiratory chain contains 3 multisubunit complexes succinate dehydrogenase (complex II, CII), ubiquinol-cytochrome c oxidoreductase (cytochrome b-c1 complex, complex III, CIII) and cytochrome c oxidase (complex IV, CIV), that cooperate to transfer electrons derived from NADH and succinate to molecular oxygen, creating an electrochemical gradient over the inner membrane that drives transmembrane transport and the ATP synthase. The cytochrome b-c1 complex catalyzes electron transfer from ubiquinol to cytochrome c, linking this redox reaction to translocation of protons across the mitochondrial inner membrane, with protons being carried across the membrane as hydrogens on the quinol. In the process called Q cycle, 2 protons are consumed from the matrix, 4 protons are released into the intermembrane space and 2 electrons are passed to cytochrome c. The polypeptide is Cytochrome b-c1 complex subunit 7 (Dermatophagoides farinae (American house dust mite)).